Here is an 856-residue protein sequence, read N- to C-terminus: PR domain zinc finger protein 1 (856 aa).

The SET domain maps to 115–233 (PRNLLFKYAA…ANQELLVWYC (119 aa)). Disordered stretches follow at residues 357-399 (THSP…APGL) and 532-571 (GAAASMKDESSPPSGSPTAGTAATSEHVVQPKATSSVMAA). Composition is skewed to low complexity over residues 373–393 (SSPEQSLKSSSPHSSPGNTVS) and 542–556 (SPPSGSPTAGTAATS). The interaction with PIAS1 stretch occupies residues 558 to 605 (HVVQPKATSSVMAAPSTDGAMNLIKNKRNMTGYKTLPYPLKKQNGKIK). 4 consecutive C2H2-type zinc fingers follow at residues 606–628 (YECNVCAKTFGQLSNLKVHLRVH), 634–656 (FKCQTCNKGFTQLAHLQKHYLVH), 662–684 (HECQVCHKRFSSTSNLKTHLRLH), and 690–712 (YQCKVCPAKFTQFVHLKLHKRLH). Lysine 847 is covalently cross-linked (Glycyl lysine isopeptide (Lys-Gly) (interchain with G-Cter in SUMO1); alternate). Lysine 847 participates in a covalent cross-link: Glycyl lysine isopeptide (Lys-Gly) (interchain with G-Cter in SUMO2); alternate.

This sequence belongs to the class V-like SAM-binding methyltransferase superfamily. As to quaternary structure, interacts with PRMT5. Interacts with FBXO10. Interacts with FBXO11. Interacts with multiple nuclear sumoylation E3 ligases, including CBX4, PIAS1, PIAS2, PIAS3, PIAS4, PML and RNF4, but not RANBP2. Interacts with LDB1, SMARCD3 and SMARCC1. Interacts with EEIG1; following TNFSF11/RANKL stimulation in bone marrow-derived macrophages, the interaction promotes the binding of PRDM1/BLIMP1 to the gene promoter of IRF8. Sumoylation at Lys-847 by PIAS1 increases transcriptional repressor activity, and is critical for plasma cell differentiation. Can be sumoylated with SUMO1 and SUMO2 by PML. Degradation of the wild-type protein mostly depends upon sumoylation, rather than ubiquitination. Desumoylated by SENP1 and SENP6. In terms of processing, ubiquitinated by SCF(FBXO11), leading to its degradation by the proteasome. Expressed in bone marrow macrophages (at protein level). Expressed in innate lymphocytes, including tissue-resident conventional natural killer (cNK) cells in liver. Expressed also weakly in tissue-resident natural killer (trNK) and natural killer T (NKT) cells in liver. As to expression, expressed in bone marrow, spleen and lymph node but not in brain, heart, kidney, liver, ovary or muscle. Weak expression detected in the lung. In terms of tissue distribution, expressed only in the yolk sac. Expressed in embryo, yolk sac, placenta, splenocytes, and activated T-cells.

The protein resides in the nucleus. Its subcellular location is the cytoplasm. Transcription factor that mediates a transcriptional program in various innate and adaptive immune tissue-resident lymphocyte T cell types such as tissue-resident memory T (Trm), natural killer (trNK) and natural killer T (NKT) cells and negatively regulates gene expression of proteins that promote the egress of tissue-resident T-cell populations from non-lymphoid organs. Plays a role in the development, retention and long-term establishment of adaptive and innate tissue-resident lymphocyte T cell types in non-lymphoid organs, such as the skin and gut, but also in other nonbarrier tissues like liver and kidney, and therefore may provide immediate immunological protection against reactivating infections or viral reinfection. Binds specifically to the PRDI element in the promoter of the beta-interferon gene. Drives the maturation of B-lymphocytes into Ig secreting cells. Associates with the transcriptional repressor ZNF683 to chromatin at gene promoter regions. Binds to the promoter and acts as a transcriptional repressor of IRF8, thereby promotes transcription of osteoclast differentiation factors such as NFATC1 and EEIG1. The sequence is that of PR domain zinc finger protein 1 (Prdm1) from Mus musculus (Mouse).